The following is a 946-amino-acid chain: Bifunctional glutamine synthetase adenylyltransferase/adenylyl-removing enzyme (946 aa).

The tract at residues 1–440 (MKPLSSPLQQ…VFNELIGDDE (440 aa)) is adenylyl removase. Residues 449–946 (SEQWRELWQD…ASWQKWLVEE (498 aa)) are adenylyl transferase.

The protein belongs to the GlnE family. Mg(2+) serves as cofactor.

It carries out the reaction [glutamine synthetase]-O(4)-(5'-adenylyl)-L-tyrosine + phosphate = [glutamine synthetase]-L-tyrosine + ADP. The catalysed reaction is [glutamine synthetase]-L-tyrosine + ATP = [glutamine synthetase]-O(4)-(5'-adenylyl)-L-tyrosine + diphosphate. Functionally, involved in the regulation of glutamine synthetase GlnA, a key enzyme in the process to assimilate ammonia. When cellular nitrogen levels are high, the C-terminal adenylyl transferase (AT) inactivates GlnA by covalent transfer of an adenylyl group from ATP to specific tyrosine residue of GlnA, thus reducing its activity. Conversely, when nitrogen levels are low, the N-terminal adenylyl removase (AR) activates GlnA by removing the adenylyl group by phosphorolysis, increasing its activity. The regulatory region of GlnE binds the signal transduction protein PII (GlnB) which indicates the nitrogen status of the cell. In Escherichia coli O7:K1 (strain IAI39 / ExPEC), this protein is Bifunctional glutamine synthetase adenylyltransferase/adenylyl-removing enzyme.